The following is a 98-amino-acid chain: Small ribosomal subunit protein uS19 (98 aa).

The tract at residues 77 to 98 (TRTYRGHAGGKAEKGGSAPKRK) is disordered.

This sequence belongs to the universal ribosomal protein uS19 family.

Protein S19 forms a complex with S13 that binds strongly to the 16S ribosomal RNA. This Prosthecochloris aestuarii (strain DSM 271 / SK 413) protein is Small ribosomal subunit protein uS19.